Reading from the N-terminus, the 55-residue chain is Preprotein translocase subunit SecG (55 aa).

Topologically, residues 1-31 are cytoplasmic; sequence MPKNNTNENFQSGAGLIRYFNEEEIKGPALD. A helical membrane pass occupies residues 32-51; that stretch reads PKLIIYIGIAMAVIVELAKI. Residues 52 to 55 are Extracellular-facing; that stretch reads FWPV.

Belongs to the SEC61-beta family. As to quaternary structure, component of the protein translocase complex. Heterotrimer consisting of alpha (SecY), beta (SecG) and gamma (SecE) subunits. Can form oligomers of the heterotrimer.

Its subcellular location is the cell membrane. Its function is as follows. Involved in protein export. The function of the beta subunit is unknown, but it may be involved in stabilization of the trimeric complex. The sequence is that of Preprotein translocase subunit SecG from Picrophilus torridus (strain ATCC 700027 / DSM 9790 / JCM 10055 / NBRC 100828 / KAW 2/3).